Consider the following 549-residue polypeptide: Efflux pump patC (549 aa).

Positions 1 to 12 (MAESTAHTSPSL) are enriched in polar residues. A disordered region spans residues 1-40 (MAESTAHTSPSLNDKEREVDQGILSDESGPAEEVKETPDQ). 14 helical membrane-spanning segments follow: residues 50–70 (LLICIAVFSANLLYGLDNTIV), 85–105 (AQLGWLGVGFTLGSVVFILPL), 116–136 (WLFIGCLTMFAAGSALCGGAP), 146–166 (VWAGAGGAGMYLGNLNLITIL), 178–198 (LVGLIYGVGCILGPIIGGAFA), 206–226 (WGFYINLIIFGIMAPIYVFLL), 252–272 (VLSAGMHVSFILFIVFGGVMW), 282–302 (LYVVAAVTLIAFALSQYFCVL), 321–341 (IALYVLMACGGAALFVAVYYI), 360–380 (LLPFICFYVATILLCGWLMPK), 385–405 (VLWYLLSGIFMVIGSATMYTV), 419–439 (ILLGLGMATTQAAYAVGPSLV), 460–482 (LLGLAIASAIFQSETLSGLNALL), and 526–546 (VYVMAIAAGALYVIASCFLPW).

The protein belongs to the major facilitator superfamily. TCR/Tet family.

Its subcellular location is the vacuole membrane. It localises to the cell membrane. In terms of biological role, efflux pump; part of the gene cluster that mediates the biosynthesis of patulin, an acetate-derived tetraketide mycotoxin produced by several fungal species that shows antimicrobial properties against several bacteria. May be involved in the secretion of E-ascladiol to be converted to patulin by the secreted patulin synthase patE. The polypeptide is Efflux pump patC (Aspergillus clavatus (strain ATCC 1007 / CBS 513.65 / DSM 816 / NCTC 3887 / NRRL 1 / QM 1276 / 107)).